The following is a 1004-amino-acid chain: 2-oxoglutarate dehydrogenase E1 component (1004 aa).

The protein belongs to the alpha-ketoglutarate dehydrogenase family. Homodimer. Part of the 2-oxoglutarate dehydrogenase (OGDH) complex composed of E1 (2-oxoglutarate dehydrogenase), E2 (dihydrolipoamide succinyltransferase) and E3 (dihydrolipoamide dehydrogenase); the complex contains multiple copies of the three enzymatic components (E1, E2 and E3). It depends on thiamine diphosphate as a cofactor.

It catalyses the reaction N(6)-[(R)-lipoyl]-L-lysyl-[protein] + 2-oxoglutarate + H(+) = N(6)-[(R)-S(8)-succinyldihydrolipoyl]-L-lysyl-[protein] + CO2. E1 component of the 2-oxoglutarate dehydrogenase (OGDH) complex which catalyzes the decarboxylation of 2-oxoglutarate, the first step in the conversion of 2-oxoglutarate to succinyl-CoA and CO(2). In Brucella melitensis biotype 2 (strain ATCC 23457), this protein is 2-oxoglutarate dehydrogenase E1 component.